Here is a 931-residue protein sequence, read N- to C-terminus: MSMKFLTGLQDLLGLYETGTAASSPASPIPPTSPSMFATPPHQQSHSSATSVRKKVCQEANSSADDPDSDARIRQCSHTRTVSFPADIGLITGYHDAPSALFHSIENSNRSIDPTEILKYYREACQRRQCAPSVGVEKQIGYFHKSPDTRQELLSLKGERVSHAQMEALEEIFKRVQFNTIDFEYTFLDDDCAISLGEMIEFYDSCVRLNLSFNKQIDVRGWAAMFKSIRNAISLQMLNLRYTNLNDRSIPSLCKLARAQPSASLTCIHLENTQMSGKNLLVLICALKYNTGIRELYLGDNGLQPTDGSHIYQLISSNTCLQLLDLRNNNIGDSGVRHICEGLRNRESIEKSALSAMVLWNNNVTGASMDSLAEALMENTKIETLNIGSNNLGVEGVARLKPALVSNSHLHRLGLQNTGINCEGAIILAECIADNTALLRVDIRDNPIALAGLLALHSAMKMNTSITLLNIDATCVRMSSEKVREYQDEFERYFREIQTYCDRNKDDVLKKLTVTFEDQDHVSEDTEKENKDADNDDKEPENEDGDTTPETSDSDASADQSDSPADKEKSEKSKKENNNNEKRPLMASASTSKVCQKERHQRFVRSSSLTCAETVHDIHDRLREMSGSTHSLDAAMSAATTLSPTMLTATYGSTPGPLDASSNTDSMKTIKKTFTVTSAAPPTLALAEWGSLPALPQASPTSTPVVRKLRRFSVSPSSSVFDVATTSSASTSPIPEVTASPHPIRPSTLAIGIPVTGSVPAGPSSAPMIFVDHHTEAASPDCTNTCEEPTTSREAERKRAEETIRQRRGQKEIKDTCRAVINDLLNYVEYEEKSQVERKASLLLRNAFSRPNPEELLKNLQRAESPLTPRTPVTPSRVLEIAEELEEETDEQVCQSVVRCLVRDVLQTEKNELRSTLDRRRRHNSVRNSPV.

Positions 20–71 (TAASSPASPIPPTSPSMFATPPHQQSHSSATSVRKKVCQEANSSADDPDSDA) are disordered. Positions 41-51 (PHQQSHSSATS) are enriched in polar residues. 8 LRR repeats span residues 232–259 (AISL…LARA), 262–285 (SASL…VLIC), 290–314 (NTGI…IYQL), 323–346 (LLDL…LRNR), 351–374 (KSAL…SLAE), 379–407 (NTKI…LVSN), 409–430 (HLHR…ILAE), and 435–458 (NTAL…ALHS). The span at 519–533 (QDHVSEDTEKENKDA) shows a compositional bias: basic and acidic residues. 2 disordered regions span residues 519–602 (QDHV…RHQR) and 780–807 (PDCT…IRQR). A compositionally biased stretch (acidic residues) spans 534-547 (DNDDKEPENEDGDT). The segment covering 554–563 (SDASADQSDS) has biased composition (low complexity). Composition is skewed to basic and acidic residues over residues 564–584 (PADK…EKRP) and 790–807 (TTSR…IRQR).

It belongs to the PPP1R37 family.

In Caenorhabditis briggsae, this protein is Protein phosphatase 1 regulatory subunit 37 homolog.